A 146-amino-acid polypeptide reads, in one-letter code: HTH-type transcriptional regulator FarR (146 aa).

One can recognise an HTH marR-type domain in the interval 7–139 (HASINIGLIQ…LKDLLAELAK (133 aa)). The segment at residues 53-76 (FQDLANQACILRPSLTGILTRLEK) is a DNA-binding region (H-T-H motif).

With respect to regulation, repressor activity requires the presence of the Integration Host Factor (IHF), which binds to sequences located between FarR binding sites A and C. IHF binding to the promoter region stabilizes the binding of FarR to its binding sites A and C and as a consequence, enhances repression of the farAB operon. Functionally, negatively controls expression of the farAB operon by binding directly to the farAB promoter region. Binds to three sites (sites A, B and C) within the DNA sequence upstream of farA. Also represses its own expression. The chain is HTH-type transcriptional regulator FarR from Neisseria gonorrhoeae.